We begin with the raw amino-acid sequence, 200 residues long: Holliday junction resolvase RecU (200 aa).

The interval 1–27 is disordered; that stretch reads MALKYPSGKEYRGNKPNAARRPAADYA. 4 residues coordinate Mg(2+): Thr-84, Asp-86, Glu-99, and Gln-118.

It belongs to the RecU family. Homodimer. It depends on Mg(2+) as a cofactor.

It is found in the cytoplasm. The enzyme catalyses Endonucleolytic cleavage at a junction such as a reciprocal single-stranded crossover between two homologous DNA duplexes (Holliday junction).. Its function is as follows. Endonuclease that resolves Holliday junction intermediates in genetic recombination. Cleaves mobile four-strand junctions by introducing symmetrical nicks in paired strands. Promotes annealing of linear ssDNA with homologous dsDNA. Required for DNA repair, homologous recombination and chromosome segregation. The protein is Holliday junction resolvase RecU of Geobacillus kaustophilus (strain HTA426).